Consider the following 476-residue polypeptide: Sulfate adenylyltransferase subunit 1 (476 aa).

Residues 24–239 (KSLLRFLTCG…LLETVDVDYE (216 aa)) form the tr-type G domain. The interval 33–40 (GSVDDGKS) is G1. A GTP-binding site is contributed by 33 to 40 (GSVDDGKS). The G2 stretch occupies residues 91–95 (GITID). Positions 112-115 (DTPG) are G3. GTP is bound by residues 112-116 (DTPGH) and 167-170 (NKMD). Residues 167–170 (NKMD) form a G4 region. The segment at 205–207 (SAL) is G5.

Belongs to the TRAFAC class translation factor GTPase superfamily. Classic translation factor GTPase family. CysN/NodQ subfamily. As to quaternary structure, heterodimer composed of CysD, the smaller subunit, and CysN.

It carries out the reaction sulfate + ATP + H(+) = adenosine 5'-phosphosulfate + diphosphate. It participates in sulfur metabolism; hydrogen sulfide biosynthesis; sulfite from sulfate: step 1/3. Its function is as follows. With CysD forms the ATP sulfurylase (ATPS) that catalyzes the adenylation of sulfate producing adenosine 5'-phosphosulfate (APS) and diphosphate, the first enzymatic step in sulfur assimilation pathway. APS synthesis involves the formation of a high-energy phosphoric-sulfuric acid anhydride bond driven by GTP hydrolysis by CysN coupled to ATP hydrolysis by CysD. The polypeptide is Sulfate adenylyltransferase subunit 1 (Vibrio parahaemolyticus serotype O3:K6 (strain RIMD 2210633)).